The chain runs to 250 residues: NAD-dependent protein deacylase (250 aa).

Residues 1 to 248 (MLGEVSKILA…PKLVEEIRRI (248 aa)) form the Deacetylase sirtuin-type domain. 20-39 (GAGISAESGIPTFRGKDGLW) is an NAD(+) binding site. Residues Y64 and R67 each contribute to the substrate site. Residue 98–101 (QNVD) participates in NAD(+) binding. H116 serves as the catalytic Proton acceptor. Zn(2+) is bound by residues C124, C127, C150, and C153. NAD(+)-binding positions include 190–192 (GTS), 216–218 (NIE), and A234.

This sequence belongs to the sirtuin family. Class III subfamily. The cofactor is Zn(2+).

The protein localises to the cytoplasm. It catalyses the reaction N(6)-acetyl-L-lysyl-[protein] + NAD(+) + H2O = 2''-O-acetyl-ADP-D-ribose + nicotinamide + L-lysyl-[protein]. The catalysed reaction is N(6)-succinyl-L-lysyl-[protein] + NAD(+) + H2O = 2''-O-succinyl-ADP-D-ribose + nicotinamide + L-lysyl-[protein]. Its function is as follows. NAD-dependent lysine deacetylase and desuccinylase that specifically removes acetyl and succinyl groups on target proteins. Modulates the activities of several proteins which are inactive in their acylated form. Deacetylates the N-terminal lysine residue of Alba, the major archaeal chromatin protein and that, in turn, increases Alba's DNA binding affinity, thereby repressing transcription. This is NAD-dependent protein deacylase from Pyrococcus furiosus (strain ATCC 43587 / DSM 3638 / JCM 8422 / Vc1).